We begin with the raw amino-acid sequence, 292 residues long: uncharacterized protein (292 aa).

The first 19 residues, Met-1–Ala-19, serve as a signal peptide directing secretion. A disordered region spans residues Lys-271–Lys-292.

This is an uncharacterized protein from Rickettsia bellii (strain RML369-C).